The chain runs to 198 residues: NAD(P)H dehydrogenase (quinone) (198 aa).

A Flavodoxin-like domain is found at 4–189 (ILVLYYSMYG…AIARYQGEHV (186 aa)). FMN contacts are provided by residues 10–15 (SMYGHI) and 78–80 (TRF). NAD(+) is bound at residue Y12. W98 lines the substrate pocket. FMN-binding positions include 113-118 (STGTGG) and H133.

The protein belongs to the WrbA family. FMN serves as cofactor.

It catalyses the reaction a quinone + NADH + H(+) = a quinol + NAD(+). The catalysed reaction is a quinone + NADPH + H(+) = a quinol + NADP(+). In Klebsiella pneumoniae (strain 342), this protein is NAD(P)H dehydrogenase (quinone).